A 160-amino-acid polypeptide reads, in one-letter code: Transmembrane protein 220 (160 aa).

Helical transmembrane passes span 3 to 23 (PALWRACNGLMAAFFALAALV), 30 to 50 (AEVWVVVYTIPAVLTLLVGLN), 62 to 82 (ISAIHILFCTVWAVGLASYLL), 100 to 120 (GLVIITAWIILCHSSSKNPVG), and 125 to 145 (LAIAIVITLFPFISWVYIYIN).

The protein resides in the membrane. The sequence is that of Transmembrane protein 220 (TMEM220) from Homo sapiens (Human).